Reading from the N-terminus, the 89-residue chain is MIDYIKSPVLKFKLIRLLEKNQYTFDVDPKATKTDVKYWVENFFGVKVIGMNSHRPPRKMKRMGPTIGYPVRYKRMIVTLRAGDSIPLF.

This sequence belongs to the universal ribosomal protein uL23 family. As to quaternary structure, part of the 50S ribosomal subunit.

It localises to the plastid. The protein resides in the chloroplast. Its function is as follows. Binds to 23S rRNA. The sequence is that of Large ribosomal subunit protein uL23c (rpl23) from Staurastrum punctulatum (Green alga).